The chain runs to 291 residues: N-acetylmannosamine kinase (291 aa).

ATP is bound by residues 5 to 12 and 132 to 139; these read AIDIGGTK and GVGGGVVS. The Zn(2+) site is built by His-156, Cys-166, Cys-168, and Cys-173.

The protein belongs to the ROK (NagC/XylR) family. NanK subfamily. Homodimer.

It catalyses the reaction an N-acyl-D-mannosamine + ATP = an N-acyl-D-mannosamine 6-phosphate + ADP + H(+). It participates in amino-sugar metabolism; N-acetylneuraminate degradation; D-fructose 6-phosphate from N-acetylneuraminate: step 2/5. Its function is as follows. Catalyzes the phosphorylation of N-acetylmannosamine (ManNAc) to ManNAc-6-P. This Escherichia coli O1:K1 / APEC protein is N-acetylmannosamine kinase.